Here is a 351-residue protein sequence, read N- to C-terminus: UDP-N-acetylglucosamine--N-acetylmuramyl-(pentapeptide) pyrophosphoryl-undecaprenol N-acetylglucosamine transferase (351 aa).

Residues 13–15 (TGG), Asn125, Arg161, Ser189, Ile241, 260–265 (ALTVCE), and Gln285 each bind UDP-N-acetyl-alpha-D-glucosamine.

This sequence belongs to the glycosyltransferase 28 family. MurG subfamily.

Its subcellular location is the cell inner membrane. It carries out the reaction di-trans,octa-cis-undecaprenyl diphospho-N-acetyl-alpha-D-muramoyl-L-alanyl-D-glutamyl-meso-2,6-diaminopimeloyl-D-alanyl-D-alanine + UDP-N-acetyl-alpha-D-glucosamine = di-trans,octa-cis-undecaprenyl diphospho-[N-acetyl-alpha-D-glucosaminyl-(1-&gt;4)]-N-acetyl-alpha-D-muramoyl-L-alanyl-D-glutamyl-meso-2,6-diaminopimeloyl-D-alanyl-D-alanine + UDP + H(+). Its pathway is cell wall biogenesis; peptidoglycan biosynthesis. In terms of biological role, cell wall formation. Catalyzes the transfer of a GlcNAc subunit on undecaprenyl-pyrophosphoryl-MurNAc-pentapeptide (lipid intermediate I) to form undecaprenyl-pyrophosphoryl-MurNAc-(pentapeptide)GlcNAc (lipid intermediate II). The protein is UDP-N-acetylglucosamine--N-acetylmuramyl-(pentapeptide) pyrophosphoryl-undecaprenol N-acetylglucosamine transferase of Haemophilus influenzae (strain ATCC 51907 / DSM 11121 / KW20 / Rd).